Here is a 633-residue protein sequence, read N- to C-terminus: Phosphomethylpyrimidine synthase (633 aa).

Substrate-binding positions include Asn-245, Met-274, Tyr-303, His-339, 359–361 (SRG), 400–403 (DGLR), and Glu-439. His-443 is a binding site for Zn(2+). Tyr-466 is a binding site for substrate. His-507 is a binding site for Zn(2+). The [4Fe-4S] cluster site is built by Cys-587, Cys-590, and Cys-595.

Belongs to the ThiC family. As to quaternary structure, homodimer. [4Fe-4S] cluster serves as cofactor.

The catalysed reaction is 5-amino-1-(5-phospho-beta-D-ribosyl)imidazole + S-adenosyl-L-methionine = 4-amino-2-methyl-5-(phosphooxymethyl)pyrimidine + CO + 5'-deoxyadenosine + formate + L-methionine + 3 H(+). The protein operates within cofactor biosynthesis; thiamine diphosphate biosynthesis. Its function is as follows. Catalyzes the synthesis of the hydroxymethylpyrimidine phosphate (HMP-P) moiety of thiamine from aminoimidazole ribotide (AIR) in a radical S-adenosyl-L-methionine (SAM)-dependent reaction. This is Phosphomethylpyrimidine synthase from Neisseria meningitidis serogroup C / serotype 2a (strain ATCC 700532 / DSM 15464 / FAM18).